Reading from the N-terminus, the 443-residue chain is Glycerol-3-phosphate acyltransferase 3-like (443 aa).

Helical transmembrane passes span 15 to 35 (WFSC…SLGI), 146 to 166 (ISLR…CILL), and 170 to 190 (ITLT…VGFL). Residues 238–243 (HTSPID) carry the HXXXXD motif motif. A helical transmembrane segment spans residues 358-378 (IMSYLLRMMTSWAIVCNVWYL).

The protein belongs to the 1-acyl-sn-glycerol-3-phosphate acyltransferase family.

Its subcellular location is the endoplasmic reticulum membrane. The catalysed reaction is sn-glycerol 3-phosphate + an acyl-CoA = a 1-acyl-sn-glycero-3-phosphate + CoA. The enzyme catalyses a 1-acyl-sn-glycero-3-phosphate + an acyl-CoA = a 1,2-diacyl-sn-glycero-3-phosphate + CoA. It functions in the pathway glycerolipid metabolism; triacylglycerol biosynthesis. The protein operates within phospholipid metabolism; CDP-diacylglycerol biosynthesis; CDP-diacylglycerol from sn-glycerol 3-phosphate: step 1/3. In terms of biological role, may transfer the acyl-group from acyl-coA to the sn-1 position of glycerol-3-phosphate, an essential step in glycerolipid biosynthesis. Also transfers the acyl-group from acyl-coA to the sn-2 position of 1-acyl-sn-glycerol-3-phosphate (lysophosphatidic acid, or LPA), forming 1,2-diacyl-sn-glycerol-3-phosphate (phosphatidic acid, or PA). This chain is Glycerol-3-phosphate acyltransferase 3-like (agpat9l), found in Danio rerio (Zebrafish).